The chain runs to 155 residues: Trypsin/factor XIIA inhibitor (155 aa).

Residues 1–28 (MASSSSSSHRRLILAAAVLLSVLAAASA) form the signal peptide. Intrachain disulfides connect C34–C83, C48–C72, C57–C114, C73–C132, and C85–C143. The active site involves R62. The propeptide at 139-155 (GVAECPWILGGGTMPSK) is C-terminal peptide.

Belongs to the protease inhibitor I6 (cereal trypsin/alpha-amylase inhibitor) family. Monomer.

The protein resides in the secreted. Potent inhibitor of mammalian trypsin and a specific inhibitor of factor XIIa (activated hageman factor). The protein is Trypsin/factor XIIA inhibitor of Zea mays (Maize).